The sequence spans 335 residues: Dihydroorotate dehydrogenase (quinone) (335 aa).

FMN is bound by residues 59-63 (AGLDK) and Thr83. Lys63 lines the substrate pocket. Position 108–112 (108–112 (NRMGF)) interacts with substrate. The FMN site is built by Asn136 and Asn169. Position 169 (Asn169) interacts with substrate. The active-site Nucleophile is the Ser172. Asn174 is a binding site for substrate. Residues Lys214 and Thr242 each contribute to the FMN site. Residue 243–244 (NT) participates in substrate binding. FMN is bound by residues Gly265, Gly294, and 315–316 (YS).

Belongs to the dihydroorotate dehydrogenase family. Type 2 subfamily. In terms of assembly, monomer. The cofactor is FMN.

It is found in the cell membrane. The enzyme catalyses (S)-dihydroorotate + a quinone = orotate + a quinol. It participates in pyrimidine metabolism; UMP biosynthesis via de novo pathway; orotate from (S)-dihydroorotate (quinone route): step 1/1. Catalyzes the conversion of dihydroorotate to orotate with quinone as electron acceptor. This is Dihydroorotate dehydrogenase (quinone) from Neisseria meningitidis serogroup C / serotype 2a (strain ATCC 700532 / DSM 15464 / FAM18).